Reading from the N-terminus, the 69-residue chain is MGMRMMFTVFLLVVLATTVVSTPSDRASDGRNAAVHERQKSLVPSVITTCCGYDPGTMCPPCRCTNSCG.

The signal sequence occupies residues 1 to 21 (MGMRMMFTVFLLVVLATTVVS). A propeptide spanning residues 22–38 (TPSDRASDGRNAAVHER) is cleaved from the precursor. At Gln39 the chain carries Pyrrolidone carboxylic acid. Ser45 is a glycosylation site (O-linked (HexNAc...) serine). 4-hydroxyproline is present on residues Pro55, Pro60, and Pro61. Cys68 is modified (cysteine amide).

The protein belongs to the conotoxin A superfamily. Post-translationally, contains 3 disulfide bonds. In terms of processing, O-linked glycan consists of Hex3-HexNAc2 pentasaccharide. As to expression, expressed by the venom duct.

The protein resides in the secreted. In terms of biological role, neurotoxin with probable activity on sodium channel. Induces intense repetitive firing of the frog neuromuscular junction, leading to a tetanic contracture in muscle fiber (spastic paralysis). In vivo, shows the same effect as the whole venom when injected on fish. Intraperitoneal injection into fish induces a period of rapid swimming followed by a spastic paralysis with stiff fibrillating fins. At high doses, the peptide is lethal to both fish and mice. This is Conotoxin SIVA from Conus striatus (Striated cone).